The following is a 115-amino-acid chain: Putative UPF0320 protein YKL225W (115 aa).

This sequence belongs to the UPF0320 family.

This chain is Putative UPF0320 protein YKL225W, found in Saccharomyces cerevisiae (strain ATCC 204508 / S288c) (Baker's yeast).